The primary structure comprises 513 residues: ATP synthase subunit alpha (513 aa).

Position 169-176 (169-176 (GDRQTGKT)) interacts with ATP.

It belongs to the ATPase alpha/beta chains family. In terms of assembly, F-type ATPases have 2 components, CF(1) - the catalytic core - and CF(0) - the membrane proton channel. CF(1) has five subunits: alpha(3), beta(3), gamma(1), delta(1), epsilon(1). CF(0) has three main subunits: a(1), b(2) and c(9-12). The alpha and beta chains form an alternating ring which encloses part of the gamma chain. CF(1) is attached to CF(0) by a central stalk formed by the gamma and epsilon chains, while a peripheral stalk is formed by the delta and b chains.

It localises to the cell inner membrane. The catalysed reaction is ATP + H2O + 4 H(+)(in) = ADP + phosphate + 5 H(+)(out). Produces ATP from ADP in the presence of a proton gradient across the membrane. The alpha chain is a regulatory subunit. This is ATP synthase subunit alpha from Hydrogenovibrio crunogenus (strain DSM 25203 / XCL-2) (Thiomicrospira crunogena).